Reading from the N-terminus, the 269-residue chain is Formamidopyrimidine-DNA glycosylase (269 aa).

Catalysis depends on Pro2, which acts as the Schiff-base intermediate with DNA. The active-site Proton donor is Glu3. The active-site Proton donor; for beta-elimination activity is Lys57. Positions 90, 109, and 150 each coordinate DNA. The segment at Gln235–Lys269 adopts an FPG-type zinc-finger fold. Residue Arg259 is the Proton donor; for delta-elimination activity of the active site.

Belongs to the FPG family. As to quaternary structure, monomer. Zn(2+) is required as a cofactor.

The enzyme catalyses Hydrolysis of DNA containing ring-opened 7-methylguanine residues, releasing 2,6-diamino-4-hydroxy-5-(N-methyl)formamidopyrimidine.. The catalysed reaction is 2'-deoxyribonucleotide-(2'-deoxyribose 5'-phosphate)-2'-deoxyribonucleotide-DNA = a 3'-end 2'-deoxyribonucleotide-(2,3-dehydro-2,3-deoxyribose 5'-phosphate)-DNA + a 5'-end 5'-phospho-2'-deoxyribonucleoside-DNA + H(+). Functionally, involved in base excision repair of DNA damaged by oxidation or by mutagenic agents. Acts as a DNA glycosylase that recognizes and removes damaged bases. Has a preference for oxidized purines, such as 7,8-dihydro-8-oxoguanine (8-oxoG). Has AP (apurinic/apyrimidinic) lyase activity and introduces nicks in the DNA strand. Cleaves the DNA backbone by beta-delta elimination to generate a single-strand break at the site of the removed base with both 3'- and 5'-phosphates. The protein is Formamidopyrimidine-DNA glycosylase of Shigella dysenteriae serotype 1 (strain Sd197).